Here is a 97-residue protein sequence, read N- to C-terminus: Putative pterin-4-alpha-carbinolamine dehydratase (97 aa).

It belongs to the pterin-4-alpha-carbinolamine dehydratase family.

The catalysed reaction is (4aS,6R)-4a-hydroxy-L-erythro-5,6,7,8-tetrahydrobiopterin = (6R)-L-erythro-6,7-dihydrobiopterin + H2O. The polypeptide is Putative pterin-4-alpha-carbinolamine dehydratase (Phenylobacterium zucineum (strain HLK1)).